Consider the following 578-residue polypeptide: Proline--tRNA ligase (578 aa).

Belongs to the class-II aminoacyl-tRNA synthetase family. ProS type 1 subfamily. As to quaternary structure, homodimer.

The protein localises to the cytoplasm. The catalysed reaction is tRNA(Pro) + L-proline + ATP = L-prolyl-tRNA(Pro) + AMP + diphosphate. Its function is as follows. Catalyzes the attachment of proline to tRNA(Pro) in a two-step reaction: proline is first activated by ATP to form Pro-AMP and then transferred to the acceptor end of tRNA(Pro). As ProRS can inadvertently accommodate and process non-cognate amino acids such as alanine and cysteine, to avoid such errors it has two additional distinct editing activities against alanine. One activity is designated as 'pretransfer' editing and involves the tRNA(Pro)-independent hydrolysis of activated Ala-AMP. The other activity is designated 'posttransfer' editing and involves deacylation of mischarged Ala-tRNA(Pro). The misacylated Cys-tRNA(Pro) is not edited by ProRS. The sequence is that of Proline--tRNA ligase from Burkholderia mallei (strain ATCC 23344).